Reading from the N-terminus, the 397-residue chain is uncharacterized protein (397 aa).

This sequence belongs to the ROK (NagC/XylR) family.

This is an uncharacterized protein from Escherichia coli (strain K12).